Here is a 365-residue protein sequence, read N- to C-terminus: Zinc finger MYND domain-containing protein 12 (365 aa).

8 residues coordinate Zn(2+): Cys17, Cys20, Cys28, Cys31, Cys37, His41, His50, and Cys54. The MYND-type; atypical zinc-finger motif lies at 17–54; sequence CEVCEAPAERVCAACTVTYYCGVVHQKADWDSIHEKIC. TPR repeat units follow at residues 172–205 and 214–247; these read SLLH…ASCA and SGGY…WHAY.

As to expression, expressed predominantly in the testis.

The protein resides in the cell projection. It localises to the cilium. Its subcellular location is the flagellum. Functionally, required for sperm flagellum function and male fertility. The sequence is that of Zinc finger MYND domain-containing protein 12 (ZMYND12) from Homo sapiens (Human).